The following is a 643-amino-acid chain: MPDRLVSATLALRDDGTLVSPEFGELHRGASGTLARAHRTFVAGNGLPARWQRRRTFTIVTTAFGAGAGFLAAWAAWRDDPARCERLHVVAVEPHPFSRDDLHRAVSHMVADTTISADVDALLDAWPMRVPGLHRLEFDAGRVVLTLAFGDTIDLLKKLVARADAFFLDGAAASSDGIRALAKLAGEHATFATHAKSDDVKHALGETGFTFREVDDRLVGDYAPRWRARRHEPPRALPVTTRRAIVIGAGLAGCAVVERLAARGWDVTLIERHERIASEASGNPAGVFHPLMTRDDNVASRLTRGGFLHALARWRALERAGHAFSRSTHGMLHLAESADDFARMRDAFDAFGAPSDYATLLDADAARAHLNLPVAQGGLLFPHGGAVWPAGLCAAQYAAAGERVRLLASTCVARLERRDDTWHALDDTGATLADAPVVVLANAGDAARLAGLRHVALQPVRGQLTLLPPGTTAPLPCPAIGDGYAVPLDDGTLLIGATFEPDDTDPAMRAAGHAENLDRVRHLLPGLIGALPDPATLRGRVAFRWVVGDRLPLIGPLADETQATANARALGGAQARDLPRMPGLYGAFGFGSRGLVWAALGAELIASQLEGEPWPLERELADAVDPARFLIRALRARRVGSAG.

The segment at methionine 1–alanine 223 is tRNA (mnm(5)s(2)U34)-methyltransferase. The FAD-dependent cmnm(5)s(2)U34 oxidoreductase stretch occupies residues isoleucine 247–glycine 643.

This sequence in the N-terminal section; belongs to the methyltransferase superfamily. tRNA (mnm(5)s(2)U34)-methyltransferase family. It in the C-terminal section; belongs to the DAO family. It depends on FAD as a cofactor.

The protein resides in the cytoplasm. The catalysed reaction is 5-aminomethyl-2-thiouridine(34) in tRNA + S-adenosyl-L-methionine = 5-methylaminomethyl-2-thiouridine(34) in tRNA + S-adenosyl-L-homocysteine + H(+). Catalyzes the last two steps in the biosynthesis of 5-methylaminomethyl-2-thiouridine (mnm(5)s(2)U) at the wobble position (U34) in tRNA. Catalyzes the FAD-dependent demodification of cmnm(5)s(2)U34 to nm(5)s(2)U34, followed by the transfer of a methyl group from S-adenosyl-L-methionine to nm(5)s(2)U34, to form mnm(5)s(2)U34. This is tRNA 5-methylaminomethyl-2-thiouridine biosynthesis bifunctional protein MnmC from Burkholderia orbicola (strain MC0-3).